We begin with the raw amino-acid sequence, 140 residues long: Inner membrane protein YphA (140 aa).

The Cytoplasmic segment spans residues 1–13 (MNTLRYFDFGAAR). Residues 14–34 (PVLLLIARIAVVLIFIIFGFP) form a helical membrane-spanning segment. At 35 to 56 (KMMGFDGTVQYMASLGAPMPML) the chain is on the periplasmic side. A helical transmembrane segment spans residues 57–77 (AAIIAVVMEVPAAILIVLGFF). Over 78-79 (TR) the chain is Cytoplasmic. The chain crosses the membrane as a helical span at residues 80–100 (PLAVLFIFYTLGTAVIGHHYW). Residues 101-116 (DMTGDAVGPNMINFWK) are Periplasmic-facing. The helical transmembrane segment at 117–137 (NVSIAGAFLLLAITGPGAISL) threads the bilayer. Over 138–140 (DRR) the chain is Cytoplasmic.

It belongs to the DoxX family.

The protein resides in the cell inner membrane. The protein is Inner membrane protein YphA (yphA) of Escherichia coli (strain K12).